The primary structure comprises 224 residues: 7-cyano-7-deazaguanine synthase (224 aa).

10-20 (LSGGLDSATVV) serves as a coordination point for ATP. Zn(2+) contacts are provided by Cys-189, Cys-199, Cys-202, and Cys-205.

The protein belongs to the QueC family. The cofactor is Zn(2+).

The enzyme catalyses 7-carboxy-7-deazaguanine + NH4(+) + ATP = 7-cyano-7-deazaguanine + ADP + phosphate + H2O + H(+). It functions in the pathway purine metabolism; 7-cyano-7-deazaguanine biosynthesis. Its function is as follows. Catalyzes the ATP-dependent conversion of 7-carboxy-7-deazaguanine (CDG) to 7-cyano-7-deazaguanine (preQ(0)). The sequence is that of 7-cyano-7-deazaguanine synthase from Pseudomonas paraeruginosa (strain DSM 24068 / PA7) (Pseudomonas aeruginosa (strain PA7)).